The sequence spans 359 residues: UDP-N-acetylglucosamine--N-acetylmuramyl-(pentapeptide) pyrophosphoryl-undecaprenol N-acetylglucosamine transferase (359 aa).

Residues 15–17 (TGG), N127, R166, S191, I245, 264–269 (ALTVSE), and Q290 contribute to the UDP-N-acetyl-alpha-D-glucosamine site.

This sequence belongs to the glycosyltransferase 28 family. MurG subfamily.

The protein resides in the cell inner membrane. The catalysed reaction is di-trans,octa-cis-undecaprenyl diphospho-N-acetyl-alpha-D-muramoyl-L-alanyl-D-glutamyl-meso-2,6-diaminopimeloyl-D-alanyl-D-alanine + UDP-N-acetyl-alpha-D-glucosamine = di-trans,octa-cis-undecaprenyl diphospho-[N-acetyl-alpha-D-glucosaminyl-(1-&gt;4)]-N-acetyl-alpha-D-muramoyl-L-alanyl-D-glutamyl-meso-2,6-diaminopimeloyl-D-alanyl-D-alanine + UDP + H(+). It participates in cell wall biogenesis; peptidoglycan biosynthesis. Cell wall formation. Catalyzes the transfer of a GlcNAc subunit on undecaprenyl-pyrophosphoryl-MurNAc-pentapeptide (lipid intermediate I) to form undecaprenyl-pyrophosphoryl-MurNAc-(pentapeptide)GlcNAc (lipid intermediate II). In Pseudomonas putida (strain W619), this protein is UDP-N-acetylglucosamine--N-acetylmuramyl-(pentapeptide) pyrophosphoryl-undecaprenol N-acetylglucosamine transferase.